Reading from the N-terminus, the 261-residue chain is Calbindin (261 aa).

A2 bears the N-acetylalanine mark. Residues 2-7 (AESHLQ) form an interaction with RANBP9 region. EF-hand domains are found at residues 11–46 (ITAS…LLQA), 53–88 (ELSP…EENF), 98–133 (KSCE…LLEK), 142–177 (KLAE…QENF), and 186–221 (MCGK…LCEK). Residues D24, D26, S28, Y30, and E35 each contribute to the Ca(2+) site. Ca(2+)-binding residues include D111, D113, S115, E122, D155, N157, D159, K161, E166, D199, D201, N203, Y205, and E210.

It belongs to the calbindin family. As to quaternary structure, interacts with RANBP9. As to expression, expressed in the modiolar nerve root and in bushy neurons in the ventral cochlear nucleus (at protein level).

Functionally, buffers cytosolic calcium. May stimulate a membrane Ca(2+)-ATPase and a 3',5'-cyclic nucleotide phosphodiesterase. The chain is Calbindin (Calb1) from Mus musculus (Mouse).